Reading from the N-terminus, the 493-residue chain is Glycerol kinase 2 (493 aa).

Residue Ser-12 participates in ADP binding. The ATP site is built by Ser-12 and Thr-13. Ser-12 provides a ligand contact to sn-glycerol 3-phosphate. Position 16 (Lys-16) interacts with ADP. Positions 82, 83, 134, and 243 each coordinate sn-glycerol 3-phosphate. Glycerol-binding residues include Arg-82, Glu-83, Tyr-134, Asp-243, and Gln-244. Thr-265 and Gly-308 together coordinate ADP. 3 residues coordinate ATP: Thr-265, Gly-308, and Asn-312. Asn-413 contributes to the ADP binding site.

Belongs to the FGGY kinase family. Homotetramer and homodimer (in equilibrium).

It catalyses the reaction glycerol + ATP = sn-glycerol 3-phosphate + ADP + H(+). It participates in polyol metabolism; glycerol degradation via glycerol kinase pathway; sn-glycerol 3-phosphate from glycerol: step 1/1. Activated by phosphorylation and inhibited by fructose 1,6-bisphosphate (FBP). Functionally, key enzyme in the regulation of glycerol uptake and metabolism. Catalyzes the phosphorylation of glycerol to yield sn-glycerol 3-phosphate. The polypeptide is Glycerol kinase 2 (Clostridium tetani (strain Massachusetts / E88)).